Here is a 110-residue protein sequence, read N- to C-terminus: Iron-sulfur cluster assembly protein CyaY (110 aa).

It belongs to the frataxin family.

In terms of biological role, involved in iron-sulfur (Fe-S) cluster assembly. May act as a regulator of Fe-S biogenesis. This Variovorax paradoxus (strain S110) protein is Iron-sulfur cluster assembly protein CyaY.